Consider the following 436-residue polypeptide: Methionine aminopeptidase 2 (436 aa).

A disordered region spans residues 1-61 (MSEIQPKTEV…KKKKAAPVAS (61 aa)). The span at 16–26 (EEEEESDDEED) shows a compositional bias: acidic residues. Positions 44–56 (KKKKKKNKKKKKA) are enriched in basic residues. His191 contacts substrate. A divalent metal cation is bound by residues Asp211, Asp222, and His291. Position 299 (His299) interacts with substrate. Residues Glu324 and Glu417 each contribute to the a divalent metal cation site.

Belongs to the peptidase M24A family. Methionine aminopeptidase eukaryotic type 2 subfamily. Co(2+) serves as cofactor. It depends on Zn(2+) as a cofactor. Requires Mn(2+) as cofactor. Fe(2+) is required as a cofactor.

It localises to the cytoplasm. The catalysed reaction is Release of N-terminal amino acids, preferentially methionine, from peptides and arylamides.. Cotranslationally removes the N-terminal methionine from nascent proteins. The N-terminal methionine is often cleaved when the second residue in the primary sequence is small and uncharged (Met-Ala-, Cys, Gly, Pro, Ser, Thr, or Val). The sequence is that of Methionine aminopeptidase 2 (metap2) from Dictyostelium discoideum (Social amoeba).